The following is a 174-amino-acid chain: Ribosome maturation factor RimM (174 aa).

Residues 98 to 171 form the PRC barrel domain; the sequence is EDEYYFHEII…TIKIHIMEGL (74 aa).

Belongs to the RimM family. In terms of assembly, binds ribosomal protein uS19.

The protein localises to the cytoplasm. Functionally, an accessory protein needed during the final step in the assembly of 30S ribosomal subunit, possibly for assembly of the head region. Essential for efficient processing of 16S rRNA. May be needed both before and after RbfA during the maturation of 16S rRNA. It has affinity for free ribosomal 30S subunits but not for 70S ribosomes. The sequence is that of Ribosome maturation factor RimM from Bacillus licheniformis (strain ATCC 14580 / DSM 13 / JCM 2505 / CCUG 7422 / NBRC 12200 / NCIMB 9375 / NCTC 10341 / NRRL NRS-1264 / Gibson 46).